A 256-amino-acid chain; its full sequence is Type III pantothenate kinase (256 aa).

6-13 (DAGNSRIK) contributes to the ATP binding site. Residues tyrosine 90 and 97-100 (GSDR) each bind substrate. The active-site Proton acceptor is aspartate 99. Threonine 123 provides a ligand contact to ATP. Residue threonine 187 participates in substrate binding.

It belongs to the type III pantothenate kinase family. In terms of assembly, homodimer. It depends on NH4(+) as a cofactor. The cofactor is K(+).

Its subcellular location is the cytoplasm. The catalysed reaction is (R)-pantothenate + ATP = (R)-4'-phosphopantothenate + ADP + H(+). It functions in the pathway cofactor biosynthesis; coenzyme A biosynthesis; CoA from (R)-pantothenate: step 1/5. In terms of biological role, catalyzes the phosphorylation of pantothenate (Pan), the first step in CoA biosynthesis. The sequence is that of Type III pantothenate kinase from Burkholderia mallei (strain NCTC 10247).